A 1224-amino-acid polypeptide reads, in one-letter code: Coatomer subunit alpha (1224 aa).

WD repeat units lie at residues 7-37 (TKSA…QLWD), 49-79 (EHDG…KVWN), 91-121 (GHLD…RVWN), and 133-163 (GHNH…RVWD). Serine 173 carries the phosphoserine modification. Threonine 185 bears the Phosphothreonine mark. 2 WD repeats span residues 203-233 (GHDR…KIWR) and 247-277 (GHYN…RVWD). The residue at position 591 (threonine 591) is a Phosphothreonine. The residue at position 965 (arginine 965) is an Omega-N-methylarginine. Serine 1193 carries the post-translational modification Phosphoserine.

As to quaternary structure, oligomeric complex that consists of at least the alpha, beta, beta', gamma, delta, epsilon and zeta subunits. Interacts with SCYL1. Interacts with JAGN1. Interacts with TMEM41B. Interacts with SVEP1. Probably interacts with PEX11A.

The protein localises to the cytoplasm. It localises to the golgi apparatus membrane. It is found in the cytoplasmic vesicle. The protein resides in the COPI-coated vesicle membrane. Its subcellular location is the secreted. Its function is as follows. The coatomer is a cytosolic protein complex that binds to dilysine motifs and reversibly associates with Golgi non-clathrin-coated vesicles, which further mediate biosynthetic protein transport from the ER, via the Golgi up to the trans Golgi network. Coatomer complex is required for budding from Golgi membranes, and is essential for the retrograde Golgi-to-ER transport of dilysine-tagged proteins. In mammals, the coatomer can only be recruited by membranes associated to ADP-ribosylation factors (ARFs), which are small GTP-binding proteins; the complex also influences the Golgi structural integrity, as well as the processing, activity, and endocytic recycling of LDL receptors. Xenin stimulates exocrine pancreatic secretion. It inhibits pentagastrin-stimulated secretion of acid, to induce exocrine pancreatic secretion and to affect small and large intestinal motility. In the gut, xenin interacts with the neurotensin receptor. In Bos taurus (Bovine), this protein is Coatomer subunit alpha (COPA).